The following is a 221-amino-acid chain: Probable GTP-binding protein EngB (221 aa).

Positions 37-219 (QGIEIALAGR…RAAIVKLLRE (183 aa)) constitute an EngB-type G domain. Residues 45 to 52 (GRSNVGKS), 72 to 76 (GRTQE), 97 to 100 (DMPG), 164 to 167 (TKTD), and 198 to 200 (TSS) each bind GTP. Residues serine 52 and threonine 74 each contribute to the Mg(2+) site.

Belongs to the TRAFAC class TrmE-Era-EngA-EngB-Septin-like GTPase superfamily. EngB GTPase family. It depends on Mg(2+) as a cofactor.

In terms of biological role, necessary for normal cell division and for the maintenance of normal septation. In Afipia carboxidovorans (strain ATCC 49405 / DSM 1227 / KCTC 32145 / OM5) (Oligotropha carboxidovorans), this protein is Probable GTP-binding protein EngB.